The following is a 361-amino-acid chain: 3-dehydroquinate synthase (361 aa).

This sequence belongs to the archaeal-type DHQ synthase family.

It carries out the reaction 2-amino-2,3,7-trideoxy-D-lyxo-hept-6-ulosonate + NAD(+) + H2O = 3-dehydroquinate + NH4(+) + NADH + H(+). Its function is as follows. Catalyzes the oxidative deamination and cyclization of 2-amino-3,7-dideoxy-D-threo-hept-6-ulosonic acid (ADH) to yield 3-dehydroquinate (DHQ), which is fed into the canonical shikimic pathway of aromatic amino acid biosynthesis. In Methanococcus vannielii (strain ATCC 35089 / DSM 1224 / JCM 13029 / OCM 148 / SB), this protein is 3-dehydroquinate synthase.